The primary structure comprises 225 residues: Germin-like protein 3-8 (225 aa).

The signal sequence occupies residues 1 to 25 (MSRTSSAPLLVLSAALAVLASTCIA). Cys34 and Cys57 form a disulfide bridge. A Cupin type-1 domain is found at 71–219 (AGLAVASDTD…SFQVDAKIIK (149 aa)). N-linked (GlcNAc...) asparagine glycosylation occurs at Asn86. His119, His121, Glu126, and His165 together coordinate Mn(2+).

The protein belongs to the germin family. In terms of assembly, oligomer (believed to be a pentamer but probably hexamer).

It is found in the secreted. It localises to the extracellular space. The protein resides in the apoplast. In terms of biological role, may play a role in plant defense. Probably has no oxalate oxidase activity even if the active site is conserved. The sequence is that of Germin-like protein 3-8 from Oryza sativa subsp. japonica (Rice).